We begin with the raw amino-acid sequence, 99 residues long: Cytochrome c2 iso-1 (99 aa).

Heme c contacts are provided by Cys-10, Cys-13, His-14, and Met-75.

It belongs to the cytochrome c family. In terms of processing, binds 1 heme c group covalently per subunit.

Cytochrome c2 is found mainly in purple, non-sulfur, photosynthetic bacteria where it functions as the electron donor to the oxidized bacteriochlorophyll in the photophosphorylation pathway. However, it may also have a role in the respiratory chain and is found in some non-photosynthetic bacteria. In Magnetospirillum fulvum (Rhodospirillum fulvum), this protein is Cytochrome c2 iso-1.